Here is a 228-residue protein sequence, read N- to C-terminus: Mediator of RNA polymerase II transcription subunit 7-B (228 aa).

This sequence belongs to the Mediator complex subunit 7 family. Component of the Mediator complex.

Its subcellular location is the nucleus. Its function is as follows. Component of the Mediator complex, a coactivator involved in the regulated transcription of nearly all RNA polymerase II-dependent genes. Mediator functions as a bridge to convey information from gene-specific regulatory proteins to the basal RNA polymerase II transcription machinery. Mediator is recruited to promoters by direct interactions with regulatory proteins and serves as a scaffold for the assembly of a functional preinitiation complex with RNA polymerase II and the general transcription factors. The polypeptide is Mediator of RNA polymerase II transcription subunit 7-B (med7-b) (Xenopus laevis (African clawed frog)).